A 697-amino-acid polypeptide reads, in one-letter code: Putative ATP-dependent RNA helicase an3 (697 aa).

The disordered stretch occupies residues 27–189 (ESGVAGTKGR…PLAPNDRVEQ (163 aa)). Basic and acidic residues-rich tracts occupy residues 89–111 (GRSDRGFYDRENSGWNSGRDKDA), 135–144 (RRTDDRRQDG), and 151–170 (RSDKSGFGRFDRGNSRWSDD). Residues 221–249 (ESFHDVTMGEIIMGNIQLTRYTRPTPVQK) carry the Q motif motif. Residues 241-248 (YTRPTPVQ) and 265-272 (AQTGSGKT) each bind ATP. The region spanning 252–444 (IPIIIEKRDL…RDFLDEYIFL (193 aa)) is the Helicase ATP-binding domain. Positions 388–391 (DEAD) match the DEAD box motif. Residues 455–616 (NITQKVVWVE…EVPSWLENMA (162 aa)) form the Helicase C-terminal domain. Residues 619-666 (QHHKSSSRGRSKSRFSGGFGAKDYRQSSGAGSSFGSSRGGRSSGHGGS) form a disordered region. Positions 622 to 631 (KSSSRGRSKS) are enriched in basic residues. A compositionally biased stretch (low complexity) spans 645–654 (SSGAGSSFGS). The span at 655-666 (SRGGRSSGHGGS) shows a compositional bias: gly residues.

It belongs to the DEAD box helicase family. DDX3/DED1 subfamily.

Its subcellular location is the cell membrane. It localises to the nucleus. It is found in the cytoplasm. The protein localises to the stress granule. The protein resides in the inflammasome. Its subcellular location is the cell projection. It localises to the lamellipodium. It catalyses the reaction ATP + H2O = ADP + phosphate + H(+). Multifunctional ATP-dependent RNA helicase. The ATPase activity can be stimulated by various ribo-and deoxynucleic acids indicative for a relaxed substrate specificity. In vitro can unwind partially double-stranded DNA with a preference for 5'-single-stranded DNA overhangs. Involved in many cellular processes, which do not necessarily require its ATPase/helicase catalytic activities. Involved in the regulation of transcription and translation initiation. Involved in innate immunity. Involved in both stress and inflammatory responses. May negatively regulate extrinsic apoptotic signaling pathway via death domain receptors. May be involved in mitotic chromosome segregation. Required for canonical Wnt signaling involved in anteroposterior neural patterning. The protein is Putative ATP-dependent RNA helicase an3 (an3) of Xenopus laevis (African clawed frog).